A 107-amino-acid chain; its full sequence is Putative regulatory protein BCG9842_A0044 (107 aa).

It belongs to the RemA family.

The polypeptide is Putative regulatory protein BCG9842_A0044 (Bacillus cereus (strain G9842)).